The following is a 418-amino-acid chain: UDP-N-acetylglucosamine 1-carboxyvinyltransferase (418 aa).

22–23 (KN) lines the phosphoenolpyruvate pocket. R91 contacts UDP-N-acetyl-alpha-D-glucosamine. C115 serves as the catalytic Proton donor. C115 carries the post-translational modification 2-(S-cysteinyl)pyruvic acid O-phosphothioketal. Residues D305 and I327 each coordinate UDP-N-acetyl-alpha-D-glucosamine.

It belongs to the EPSP synthase family. MurA subfamily.

Its subcellular location is the cytoplasm. It catalyses the reaction phosphoenolpyruvate + UDP-N-acetyl-alpha-D-glucosamine = UDP-N-acetyl-3-O-(1-carboxyvinyl)-alpha-D-glucosamine + phosphate. The protein operates within cell wall biogenesis; peptidoglycan biosynthesis. In terms of biological role, cell wall formation. Adds enolpyruvyl to UDP-N-acetylglucosamine. The sequence is that of UDP-N-acetylglucosamine 1-carboxyvinyltransferase from Aeromonas hydrophila subsp. hydrophila (strain ATCC 7966 / DSM 30187 / BCRC 13018 / CCUG 14551 / JCM 1027 / KCTC 2358 / NCIMB 9240 / NCTC 8049).